The sequence spans 371 residues: Opine oxidase subunit B (371 aa).

In terms of assembly, heterodimer of a subunit A and a subunit B.

It participates in opine metabolism; octopine degradation. Its function is as follows. Oxidative cleavage of octopine into L-arginine and pyruvate. In Agrobacterium tumefaciens (strain Ach5), this protein is Opine oxidase subunit B (ooxB).